Here is a 314-residue protein sequence, read N- to C-terminus: Aromatic prenyltransferase (314 aa).

It belongs to the aromatic prenyltransferase family.

In terms of biological role, prenyltransferase that attaches isoprenoid moieties to carbon atoms of aromatic substrates in an enzyme-catalyzed Friedel-Crafts reaction. The chain is Aromatic prenyltransferase from Arthroderma otae (strain ATCC MYA-4605 / CBS 113480) (Microsporum canis).